Consider the following 1265-residue polypeptide: 5-oxoprolinase (1265 aa).

This sequence belongs to the oxoprolinase family. Homodimer.

The protein localises to the cytoplasm. It localises to the cytosol. It catalyses the reaction 5-oxo-L-proline + ATP + 2 H2O = L-glutamate + ADP + phosphate + H(+). In terms of biological role, catalyzes the cleavage of 5-oxo-L-proline to form L-glutamate coupled to the hydrolysis of ATP to ADP and inorganic phosphate. This chain is 5-oxoprolinase (oplah), found in Dictyostelium discoideum (Social amoeba).